We begin with the raw amino-acid sequence, 342 residues long: Uroporphyrinogen decarboxylase (342 aa).

Substrate contacts are provided by residues 22–26 (RQAGR), phenylalanine 42, aspartate 72, tyrosine 146, serine 201, and histidine 317.

It belongs to the uroporphyrinogen decarboxylase family. As to quaternary structure, homodimer.

It is found in the cytoplasm. The enzyme catalyses uroporphyrinogen III + 4 H(+) = coproporphyrinogen III + 4 CO2. Its pathway is porphyrin-containing compound metabolism; protoporphyrin-IX biosynthesis; coproporphyrinogen-III from 5-aminolevulinate: step 4/4. Catalyzes the decarboxylation of four acetate groups of uroporphyrinogen-III to yield coproporphyrinogen-III. The chain is Uroporphyrinogen decarboxylase from Orientia tsutsugamushi (strain Ikeda) (Rickettsia tsutsugamushi).